We begin with the raw amino-acid sequence, 485 residues long: MTSDIHLSLAQIHNLLISREKSVEEVTQACLDRIIATEPTINAFITICAEEALSEAKKLDQSTPDPKKPLWGIPIAVKDNILTKNIPTTAASCMLKHFIPQYDAFIIQQLKNAGAIIIGKTNLDEFAMGSSTETSFFGPTYNPWNTKCVPGGSSGGSAASVAAFQCFSAIGTDTGGSIRQPAALCGCIGLKPTYGRVSRYGIIAYASSLDQAGPITRTVEDAAIMLSVLAKHDPQDTTSSFKATDNYYINLKKQDLTGITIGIPKEFISEHIDPPILDIYQQAIEQAKELGAKTIDLSLPHATDHAIATYYIIATAEASSNLARFDGVRYGYRAKNSHTLEELYINSRTKGFGEEVKRRILLGTHVLSTDYYENYYHKAAQVRYLILQDFLSVFKKCDILLTPVSPITAWEIGSTIKKPITIYHKDIFTVSLNLAGLPGLSIPAGLVKGLPVGIQLIGQAFDESTLLSIGNILHKYLGPTSQPNL.

Residues Lys-78 and Ser-153 each act as charge relay system in the active site. The active-site Acyl-ester intermediate is Ser-177.

This sequence belongs to the amidase family. GatA subfamily. Heterotrimer of A, B and C subunits.

The enzyme catalyses L-glutamyl-tRNA(Gln) + L-glutamine + ATP + H2O = L-glutaminyl-tRNA(Gln) + L-glutamate + ADP + phosphate + H(+). Allows the formation of correctly charged Gln-tRNA(Gln) through the transamidation of misacylated Glu-tRNA(Gln) in organisms which lack glutaminyl-tRNA synthetase. The reaction takes place in the presence of glutamine and ATP through an activated gamma-phospho-Glu-tRNA(Gln). This chain is Glutamyl-tRNA(Gln) amidotransferase subunit A, found in Lawsonia intracellularis (strain PHE/MN1-00).